Reading from the N-terminus, the 300-residue chain is Bifunctional protein FolD (300 aa).

NADP(+) contacts are provided by residues 169–171 (GRG), serine 196, and isoleucine 237.

This sequence belongs to the tetrahydrofolate dehydrogenase/cyclohydrolase family. In terms of assembly, homodimer.

It carries out the reaction (6R)-5,10-methylene-5,6,7,8-tetrahydrofolate + NADP(+) = (6R)-5,10-methenyltetrahydrofolate + NADPH. The catalysed reaction is (6R)-5,10-methenyltetrahydrofolate + H2O = (6R)-10-formyltetrahydrofolate + H(+). Its pathway is one-carbon metabolism; tetrahydrofolate interconversion. In terms of biological role, catalyzes the oxidation of 5,10-methylenetetrahydrofolate to 5,10-methenyltetrahydrofolate and then the hydrolysis of 5,10-methenyltetrahydrofolate to 10-formyltetrahydrofolate. In Clavibacter sepedonicus (Clavibacter michiganensis subsp. sepedonicus), this protein is Bifunctional protein FolD.